A 1561-amino-acid chain; its full sequence is Formin-E (1561 aa).

Positions 1-28 are enriched in low complexity; sequence MDNHSSSSNPSSLSSSSSSSSSSSSFLS. 4 disordered regions span residues 1–63, 77–187, 211–279, and 305–365; these read MDNH…EEKP, EEEE…GKLS, PIIV…SSED, and ILRS…NLNY. The segment covering 29-51 has biased composition (basic and acidic residues); that stretch reads DHVKKEEQNGLDTIKEEIENKIE. Positions 32 to 85 form a coiled coil; that stretch reads KKEEQNGLDTIKEEIENKIENEEEEEKIEEKPIEKVEEEKIIVQKEEEEKIEEE. Acidic residues predominate over residues 80–89; sequence EKIEEEPIEK. Residues 103–120 are compositionally biased toward polar residues; the sequence is DNINTTVEAKTLETSTEP. Positions 158-208 form a coiled coil; it reads EQQEQQEKQKEETKPSIREEVKEKIKGKLSEIKEEIKDIKEEIKHVIREEV. Positions 162–187 are enriched in basic and acidic residues; sequence QQEKQKEETKPSIREEVKEKIKGKLS. Positions 220–229 are enriched in pro residues; the sequence is SPPPPPPPPS. A compositionally biased stretch (low complexity) spans 230-258; that stretch reads ITVQSSSPVSSQISSPVSSPVSSPKPSVT. Over residues 305-320 the composition is skewed to polar residues; sequence ILRSKSSPNPGANNPN. Residues 326–365 show a composition bias toward low complexity; the sequence is NNSSSSSSSNNNSDNNNNSDNNSNNNNINNNNSSSNNLNY. Residues 379–427 form a Phorbol-ester/DAG-type zinc finger; the sequence is YHDFKIHRGTSSCVYCGENTRLWSTSYKCFFCGVVCHKKCLDSMNTIPC. Residues 465–534 show a composition bias toward low complexity; sequence PSSITNSSSK…TSISSPPIAS (70 aa). The segment at 465 to 549 is disordered; it reads PSSITNSSSK…PLLQQQQQQQ (85 aa). The stretch at 541–573 forms a coiled coil; that stretch reads LLQQQQQQQQQQQQQQQQQQQQQQQQQQISTTQ. The GBD/FH3 domain maps to 581–929; that stretch reads SEKPDDDMIN…QISLHKGGFE (349 aa). Residues 952 to 989 adopt a coiled-coil conformation; that stretch reads LNRKLGELEKQNIDKAMKIQEQDINIKSLLDLLKQLKD. Disordered regions lie at residues 1009–1092, 1466–1508, and 1526–1561; these read MEPP…VPKP, EEKR…SDED, and RQAKGRRRTTHQIATSKMISNNLDPSKILPTSPNKN. The span at 1017-1033 shows a compositional bias: low complexity; the sequence is SVKSPDDPNNAAPIVVA. Positions 1019–1081 constitute an FH1 domain; it reads KSPDDPNNAA…LGAKKPPAGV (63 aa). A compositionally biased stretch (pro residues) spans 1034-1070; the sequence is PIPPPPPPISGAPPPPPPPPPPMKGGAGPPPPPPPPG. Over residues 1071-1081 the composition is skewed to low complexity; the sequence is KLGAKKPPAGV. Residues 1086 to 1475 form the FH2 domain; sequence PPKVPKPSHP…EEKRLQQKQQ (390 aa). The stretch at 1398-1491 forms a coiled coil; the sequence is LATASTEVEK…RKLTTSNESA (94 aa). The span at 1466 to 1481 shows a compositional bias: basic and acidic residues; the sequence is EEKRLQQKQQRQERAV. 2 stretches are compositionally biased toward polar residues: residues 1484–1498 and 1536–1561; these read LTTSNESASASPNHA and HQIATSKMISNNLDPSKILPTSPNKN. The 31-residue stretch at 1488–1518 folds into the DAD domain; it reads NESASASPNHAKSTDDKSDEDDDIVNDLLMA.

Belongs to the formin homology family. Diaphanous subfamily. Interacts (via GBD/FH3 domain) with activated Rho-GTPases.

In terms of biological role, formins play an important role in the nucleation of actin and the formation of linear actin filaments. In Dictyostelium discoideum (Social amoeba), this protein is Formin-E (forE).